The sequence spans 280 residues: uncharacterized protein (280 aa).

6 helical membrane passes run 3–23 (ILIT…GMYI), 52–72 (FGLF…GSIV), 81–101 (INGL…NLQI), 123–143 (NWLV…LILL), 196–216 (FADI…IIIG), and 233–253 (IFAC…LLHI).

Its subcellular location is the cell membrane. This is an uncharacterized protein from Rickettsia prowazekii (strain Madrid E).